The chain runs to 193 residues: Imidazoleglycerol-phosphate dehydratase (193 aa).

It belongs to the imidazoleglycerol-phosphate dehydratase family.

The protein localises to the cytoplasm. It carries out the reaction D-erythro-1-(imidazol-4-yl)glycerol 3-phosphate = 3-(imidazol-4-yl)-2-oxopropyl phosphate + H2O. It functions in the pathway amino-acid biosynthesis; L-histidine biosynthesis; L-histidine from 5-phospho-alpha-D-ribose 1-diphosphate: step 6/9. This is Imidazoleglycerol-phosphate dehydratase from Saccharolobus islandicus (strain M.16.27) (Sulfolobus islandicus).